Consider the following 139-residue polypeptide: Putative nickel-responsive regulator (139 aa).

Positions 79, 90, 92, and 98 each coordinate Ni(2+).

The protein belongs to the transcriptional regulatory CopG/NikR family. Ni(2+) is required as a cofactor.

Its function is as follows. Transcriptional regulator. The polypeptide is Putative nickel-responsive regulator (Solidesulfovibrio magneticus (strain ATCC 700980 / DSM 13731 / RS-1) (Desulfovibrio magneticus)).